A 293-amino-acid polypeptide reads, in one-letter code: Xylanase inhibitor protein XIP (293 aa).

The N-terminal stretch at 1–21 is a signal peptide; it reads MALRRLAALLSLAVLLSAGLA. Residues 31–293 form the GH18 domain; that stretch reads GDTVIIWGRN…DKKTGFTAHL (263 aa). Disulfide bonds link Cys-50/Cys-92 and Cys-189/Cys-218.

This sequence belongs to the glycosyl hydrolase 18 family. Xylanase inhibitor subfamily. Expressed in mature grain.

Its subcellular location is the secreted. Its function is as follows. Fungal xylanase inhibitor. Possesses competitive inhibiting activity against several fungal endo-1,4-beta-D-xylanases belonging to glycoside hydrolase family 10 (GH10) and family 11 (GH11). May function in plant defense against secreted fungal pathogen xylanases. Is similar to class III chitinases, but does not exhibit chitinase activity. This Oryza sativa subsp. japonica (Rice) protein is Xylanase inhibitor protein XIP.